The following is a 453-amino-acid chain: Ribulose bisphosphate carboxylase large chain (453 aa).

The propeptide occupies 1 to 2 (MS). The residue at position 3 (proline 3) is an N-acetylproline. At lysine 14 the chain carries N6,N6,N6-trimethyllysine. Residues asparagine 123 and threonine 173 each contribute to the substrate site. Lysine 175 serves as the catalytic Proton acceptor. Lysine 177 provides a ligand contact to substrate. The Mg(2+) site is built by lysine 201, aspartate 203, and glutamate 204. Lysine 201 is subject to N6-carboxylysine. Histidine 294 (proton acceptor) is an active-site residue. Residues arginine 295, histidine 327, and serine 379 each contribute to the substrate site.

It belongs to the RuBisCO large chain family. Type I subfamily. In terms of assembly, heterohexadecamer of 8 large chains and 8 small chains; disulfide-linked. The disulfide link is formed within the large subunit homodimers. Requires Mg(2+) as cofactor. In terms of processing, the disulfide bond which can form in the large chain dimeric partners within the hexadecamer appears to be associated with oxidative stress and protein turnover.

The protein localises to the plastid. It localises to the chloroplast. It carries out the reaction 2 (2R)-3-phosphoglycerate + 2 H(+) = D-ribulose 1,5-bisphosphate + CO2 + H2O. It catalyses the reaction D-ribulose 1,5-bisphosphate + O2 = 2-phosphoglycolate + (2R)-3-phosphoglycerate + 2 H(+). Functionally, ruBisCO catalyzes two reactions: the carboxylation of D-ribulose 1,5-bisphosphate, the primary event in carbon dioxide fixation, as well as the oxidative fragmentation of the pentose substrate in the photorespiration process. Both reactions occur simultaneously and in competition at the same active site. The polypeptide is Ribulose bisphosphate carboxylase large chain (Galium aparine (Catchweed bedstraw)).